The sequence spans 337 residues: Fructose-1,6-bisphosphatase class 1 (337 aa).

Residues Glu91, Asp113, Leu115, and Asp116 each coordinate Mg(2+). Residues 116–119 (DGSS), Asn209, Tyr242, and Lys275 contribute to the substrate site. Position 281 (Glu281) interacts with Mg(2+).

It belongs to the FBPase class 1 family. As to quaternary structure, homotetramer. Requires Mg(2+) as cofactor.

The protein localises to the cytoplasm. It carries out the reaction beta-D-fructose 1,6-bisphosphate + H2O = beta-D-fructose 6-phosphate + phosphate. Its pathway is carbohydrate biosynthesis; gluconeogenesis. The sequence is that of Fructose-1,6-bisphosphatase class 1 from Nitratidesulfovibrio vulgaris (strain DP4) (Desulfovibrio vulgaris).